The sequence spans 396 residues: Inhibitory POU protein (396 aa).

Positions Arg86–Ile95 match the POU-IV box motif. Residues Asp222–Glu299 enclose the POU-specific domain. Positions Ala302–Ala328 are disordered. The homeobox; atypical DNA-binding region spans Lys320 to Arg377.

It belongs to the POU transcription factor family. Class-4 subfamily. In terms of tissue distribution, coexpressed with vvl in overlapping subsets of neurons in the embryonic central nervous system. Expressed in olfactory neurons.

It localises to the nucleus. Functionally, modulates gene transcription; simultaneously generates both a specific activator and an inhibitor of gene transcription, capable of modulating two distinct regulatory programs during neural development. Has a role in olfactory behavior. This Drosophila melanogaster (Fruit fly) protein is Inhibitory POU protein (acj6).